Here is a 230-residue protein sequence, read N- to C-terminus: Cytidylate kinase (230 aa).

12 to 20 is a binding site for ATP; the sequence is GPSGAGKGT.

It belongs to the cytidylate kinase family. Type 1 subfamily.

It localises to the cytoplasm. The enzyme catalyses CMP + ATP = CDP + ADP. The catalysed reaction is dCMP + ATP = dCDP + ADP. The protein is Cytidylate kinase of Shewanella sp. (strain MR-4).